The sequence spans 2434 residues: ATP-binding cassette sub-family A member 2 (2434 aa).

Asn14 is a glycosylation site (N-linked (GlcNAc...) asparagine). Helical transmembrane passes span 22-42 (PWVLAFEIFIPLVLFFILLGL) and 54-74 (AFYTAAPLTSAGILPVMQSLC). Asn89, Asn168, and Asn173 each carry an N-linked (GlcNAc...) asparagine glycan. Gln271 carries the post-translational modification N5-methylglutamine. N-linked (GlcNAc...) asparagine glycosylation is found at Asn305, Asn368, Asn379, Asn420, Asn432, Asn476, Asn484, Asn494, Asn530, Asn549, Asn590, Asn600, and Asn628. Residues 354–369 (RAPAPQAGSPSGPANS) show a composition bias toward low complexity. Positions 354–396 (RAPAPQAGSPSGPANSTGVGANTGPNTTVEEGTQSPVTPASPD) are disordered. Residues 370-396 (TGVGANTGPNTTVEEGTQSPVTPASPD) are compositionally biased toward polar residues. 6 helical membrane passes run 699 to 719 (FLFVIEHMMPLCMVISWVYSV), 750 to 770 (VAWFITGFVQLSISVTALTAI), 782 to 802 (VLIIWLFLAVYAVATIMFCFL), 813 to 833 (ASACGGIIYFLSYVPYMYVAI), 857 to 877 (AFGLGSKYFALYEVAGVGIQW), and 893 to 913 (LLAVTMLMVDTVVYGVLTWYI). One can recognise an ABC transporter 1 domain in the interval 990 to 1221 (VCVDKLTKVY…YGDGYRLTLV (232 aa)). Residue 1024–1031 (GHNGAGKT) participates in ATP binding. The segment at 1225–1246 (AEPGTSQEPGMASSPSGRPQLS) is disordered. Over residues 1228 to 1246 (GTSQEPGMASSPSGRPQLS) the composition is skewed to polar residues. Ser1238 is modified (phosphoserine). Residue Asn1247 is glycosylated (N-linked (GlcNAc...) asparagine). Residues Ser1327 and Ser1331 each carry the phosphoserine modification. Residues 1461–1481 (ILLPAFFVCVAMTVALSVPEI) form a helical membrane-spanning segment. N-linked (GlcNAc...) asparagine glycans are attached at residues Asn1496, Asn1549, and Asn1557. A disordered region spans residues 1587-1606 (NFVPPPPSPAPSDSPLSPDE). The span at 1589 to 1598 (VPPPPSPAPS) shows a compositional bias: pro residues. 3 N-linked (GlcNAc...) asparagine glycosylation sites follow: Asn1613, Asn1678, and Asn1776. 5 helical membrane-spanning segments follow: residues 1793–1813 (VVIAIFIIVAMSFVPASFVVF), 1842–1862 (VWDMLNYLVPATCCIIILFVF), 1873–1893 (FPAVLSLFLLYGWSITPIMYP), 1906–1926 (VFLIVINLFIGITATVATFLL), and 1992–2012 (GLVAMTVEGFVGFFLTIMCQY). One can recognise an ABC transporter 2 domain in the interval 2051-2286 (VKIENLTKVY…FGDGYMITVR (236 aa)). Asn2055 is a glycosylation site (N-linked (GlcNAc...) asparagine). 2088–2095 (GVNGAGKT) contacts ATP. Thr2411 is modified (phosphothreonine).

It belongs to the ABC transporter superfamily. ABCA family. N-glycosylated. Post-translationally, methylated at Gln-271 by N6AMT1. As to expression, expressed at high levels in brain, at moderate levels in heart, kidney and lung, and at low levels in skeletal muscle, stomach, spleen, colon and pancreas. Not detected in the liver or small intestine. In brain, highly expressed in white matter and detected in oligodendrocytes. Expressed in cerebellum as well as the anterior commissure. Expressed mainly in the white matter but is also scattered in gray matter throughout the whole brain. Expressed in myelinating cells of both ventral and dorsal restricted regions in newborn spinal cord. Expressed in non-myelin-forming as well as in myelin-forming Schwann cells in the sciatic nerve.

It localises to the endosome membrane. It is found in the lysosome membrane. In terms of biological role, probable transporter, its natural substrate has not been found yet. May have a role in macrophage lipid metabolism and neural development. May play a role in myelination, perhaps as a transporter for certain kinds of myelin chemical components. May play an important role in gamma-secretase processing of APP and thus in amyloid-beta peptide generation. Regulates esterification of plasma membrane cholesterol by modulation of sphingolipid metabolism. Functionally, probable lipid transporter that modulates cholesterol sequestration in the late endosome/lysosome by regulating the intracellular sphingolipid metabolism, in turn participates in cholesterol homeostasis. May alter the transbilayer distribution of ceramide in the intraluminal membrane lipid bilayer, favoring its retention in the outer leaflet that results in increased acid ceramidase activity in the late endosome/lysosome, facilitating ceramide deacylation to sphingosine leading to the sequestration of free cholesterol in lysosomes. In addition regulates amyloid-beta production either by activating a signaling pathway that regulates amyloid precursor protein transcription through the modulation of sphingolipid metabolism or through its role in gamma-secretase processing of APP. May play a role in myelin formation. The polypeptide is ATP-binding cassette sub-family A member 2 (Rattus norvegicus (Rat)).